Consider the following 388-residue polypeptide: Oxytocin receptor (388 aa).

The Extracellular portion of the chain corresponds to 1 to 38 (MEGTPAANWSIELDLGSGVPPGAEGNLTAGPPRRNEAL). Asn-8 and Asn-26 each carry an N-linked (GlcNAc...) asparagine glycan. A helical transmembrane segment spans residues 39–63 (ARVEVAVLCLILFLALSGNACVLLA). At 64 to 74 (LRTTRHKHSRL) the chain is on the cytoplasmic side. A helical transmembrane segment spans residues 75-97 (FFFMKHLSIADLVVAVFQVLPQL). Residues 98-113 (LWDITFRFYGPDLLCR) lie on the Extracellular side of the membrane. Cys-112 and Cys-187 form a disulfide bridge. The chain crosses the membrane as a helical span at residues 114–135 (LVKYLQVVGMFASTYLLLLMSL). Residues 136-154 (DRCLAICQPLRSLRRRTDR) lie on the Cytoplasmic side of the membrane. A helical transmembrane segment spans residues 155-175 (LAVLATWLGCLVASVPQVHIF). Topologically, residues 176–202 (SLREVADGVFDCWAVFIQPWGPKAYVT) are extracellular. The chain crosses the membrane as a helical span at residues 203–225 (WITLAVYIVPVIVLAACYGLISF). Residues 226-274 (KIWQNLRLKTAAAAAAAEGSDAAGGAGRAALARVSSVKLISKAKIRTVK) lie on the Cytoplasmic side of the membrane. Residues 275–293 (MTFIIVLAFIVCWTPFFFV) form a helical membrane-spanning segment. Residues 294 to 308 (QMWSVWDVNAPKEAS) are Extracellular-facing. The chain crosses the membrane as a helical span at residues 309-331 (AFIIAMLLASLNSCCNPWIYMLF). Residues 332-388 (TGHLFHELVQRFLCCSARYLKGSRPGETSISKKSNSSTFVLSRRSSSQRSCSQPSSA) are Cytoplasmic-facing. The tract at residues 354-388 (SRPGETSISKKSNSSTFVLSRRSSSQRSCSQPSSA) is disordered. Phosphoserine occurs at positions 365 and 367. Low complexity predominate over residues 365–388 (SNSSTFVLSRRSSSQRSCSQPSSA).

This sequence belongs to the G-protein coupled receptor 1 family. Vasopressin/oxytocin receptor subfamily.

Its subcellular location is the cell membrane. In terms of biological role, receptor for oxytocin. The activity of this receptor is mediated by G proteins which activate a phosphatidylinositol-calcium second messenger system. This chain is Oxytocin receptor (Oxtr), found in Mus musculus (Mouse).